Consider the following 220-residue polypeptide: Vesicle-associated membrane protein 7 (220 aa).

The residue at position 2 (Ala-2) is an N-acetylalanine. At 2 to 188 the chain is on the cytoplasmic side; sequence AILFAVVARG…ARAMCVKNVK (187 aa). The Longin domain maps to 7–110; sequence VVARGTTILA…AMNSEFSSVL (104 aa). Residues 125-185 form the v-SNARE coiled-coil homology domain; sequence RVTETQAQVD…RNLARAMCVK (61 aa). Phosphoserine occurs at positions 167 and 168. A helical; Anchor for type IV membrane protein transmembrane segment spans residues 189-209; sequence LTAIIVVVSIVFIYIIVSPLC. Residues 210–220 are Vesicular-facing; the sequence is GGFTWPSCVKK.

It belongs to the synaptobrevin family. As to quaternary structure, may interact with STX17. Component of the SNARE complex composed of STX4, SNAP23 and VAMP7 that binds SYT7 during lysosomal exocytosis. Component of the SNARE complex composed of STX7, STX8, VAMP7 and VTI1B that is required for heterotypic fusion of late endosomes with lysosomes. Interacts with PICALM. Interacts with RAB21. In terms of tissue distribution, expressed in brain, kidney, liver, lung, spleen and thymus. Not expressed in heart and skeletal muscle.

The protein resides in the cytoplasmic vesicle. Its subcellular location is the secretory vesicle membrane. It localises to the golgi apparatus. The protein localises to the trans-Golgi network membrane. It is found in the late endosome membrane. The protein resides in the lysosome membrane. Its subcellular location is the endoplasmic reticulum membrane. It localises to the phagosome membrane. The protein localises to the synapse. It is found in the synaptosome. In terms of biological role, involved in the targeting and/or fusion of transport vesicles to their target membrane during transport of proteins from the early endosome to the lysosome. Required for heterotypic fusion of late endosomes with lysosomes and homotypic lysosomal fusion. Required for calcium regulated lysosomal exocytosis. Involved in the export of chylomicrons from the endoplasmic reticulum to the cis Golgi. Required for exocytosis of mediators during eosinophil and neutrophil degranulation, and target cell killing by natural killer cells. Required for focal exocytosis of late endocytic vesicles during phagosome formation. The chain is Vesicle-associated membrane protein 7 (Vamp7) from Rattus norvegicus (Rat).